Reading from the N-terminus, the 308-residue chain is uncharacterized protein (308 aa).

The first 28 residues, 1 to 28, serve as a signal peptide directing secretion; the sequence is MILMKKFEIILFLFIAVLIFVFGYFVGA.

This is an uncharacterized protein from Methanocaldococcus jannaschii (strain ATCC 43067 / DSM 2661 / JAL-1 / JCM 10045 / NBRC 100440) (Methanococcus jannaschii).